Consider the following 317-residue polypeptide: Methionyl-tRNA formyltransferase (317 aa).

Residue 109–112 coordinates (6S)-5,6,7,8-tetrahydrofolate; sequence SLLP.

Belongs to the Fmt family.

It carries out the reaction L-methionyl-tRNA(fMet) + (6R)-10-formyltetrahydrofolate = N-formyl-L-methionyl-tRNA(fMet) + (6S)-5,6,7,8-tetrahydrofolate + H(+). In terms of biological role, attaches a formyl group to the free amino group of methionyl-tRNA(fMet). The formyl group appears to play a dual role in the initiator identity of N-formylmethionyl-tRNA by promoting its recognition by IF2 and preventing the misappropriation of this tRNA by the elongation apparatus. The protein is Methionyl-tRNA formyltransferase of Halalkalibacterium halodurans (strain ATCC BAA-125 / DSM 18197 / FERM 7344 / JCM 9153 / C-125) (Bacillus halodurans).